We begin with the raw amino-acid sequence, 125 residues long: Large ribosomal subunit protein bL19 (125 aa).

Belongs to the bacterial ribosomal protein bL19 family.

Functionally, this protein is located at the 30S-50S ribosomal subunit interface and may play a role in the structure and function of the aminoacyl-tRNA binding site. This Synechococcus sp. (strain JA-2-3B'a(2-13)) (Cyanobacteria bacterium Yellowstone B-Prime) protein is Large ribosomal subunit protein bL19.